Reading from the N-terminus, the 252-residue chain is tRNA (guanine-N(1)-)-methyltransferase (252 aa).

Residues Gly-113 and 133-138 (IGDYVL) contribute to the S-adenosyl-L-methionine site.

Belongs to the RNA methyltransferase TrmD family. As to quaternary structure, homodimer.

The protein resides in the cytoplasm. It catalyses the reaction guanosine(37) in tRNA + S-adenosyl-L-methionine = N(1)-methylguanosine(37) in tRNA + S-adenosyl-L-homocysteine + H(+). Functionally, specifically methylates guanosine-37 in various tRNAs. The chain is tRNA (guanine-N(1)-)-methyltransferase from Nitrosococcus oceani (strain ATCC 19707 / BCRC 17464 / JCM 30415 / NCIMB 11848 / C-107).